A 287-amino-acid polypeptide reads, in one-letter code: Putative holocytochrome-c1 synthase (287 aa).

Residues 1-12 show a composition bias toward polar residues; sequence MRGFGSDSSQAS. 2 disordered regions span residues 1–63 and 81–100; these read MRGF…QPSS and QSQSANSTQQAQPPKLSAPL. Low complexity-rich tracts occupy residues 31–63 and 81–92; these read QARAAQSASTSAAPALPQSVQVAPASQPSQPSS and QSQSANSTQQAQ.

The protein belongs to the cytochrome c-type heme lyase family.

Its subcellular location is the mitochondrion inner membrane. The enzyme catalyses holo-[cytochrome c] = apo-[cytochrome c] + heme b. Functionally, probable lyase that catalyzes the covalent linking of the heme group to the cytochrome C apoprotein to produce the mature functional cytochrome. This is Putative holocytochrome-c1 synthase from Chaetomium thermophilum (strain DSM 1495 / CBS 144.50 / IMI 039719) (Thermochaetoides thermophila).